The primary structure comprises 203 residues: Small ribosomal subunit protein uS4 (203 aa).

The region spanning 93 to 156 (QRLDNVVFRL…MKVPAILEAV (64 aa)) is the S4 RNA-binding domain.

This sequence belongs to the universal ribosomal protein uS4 family. Part of the 30S ribosomal subunit. Contacts protein S5. The interaction surface between S4 and S5 is involved in control of translational fidelity.

Its function is as follows. One of the primary rRNA binding proteins, it binds directly to 16S rRNA where it nucleates assembly of the body of the 30S subunit. In terms of biological role, with S5 and S12 plays an important role in translational accuracy. The chain is Small ribosomal subunit protein uS4 from Lactococcus lactis subsp. lactis (strain IL1403) (Streptococcus lactis).